Reading from the N-terminus, the 220-residue chain is V-set and transmembrane domain-containing protein 2-like protein (220 aa).

Positions 1-24 (MGAPLAAALGALHYLALFLQLGGA) are cleaved as a signal peptide. One can recognise an Ig-like domain in the interval 41-158 (ALFTETPHDM…DGGRGVPRVL (118 aa)). Residues C62 and C142 are joined by a disulfide bond. The span at 165–180 (PAPPRAPRPRGQPPGE) shows a compositional bias: pro residues. A disordered region spans residues 165–220 (PAPPRAPRPRGQPPGEEPGRGPTLLFLIILPGTGSGTPREAEPHQPHAGGCPARQS).

This chain is V-set and transmembrane domain-containing protein 2-like protein (Vstm2l), found in Mus musculus (Mouse).